The sequence spans 241 residues: Triosephosphate isomerase (241 aa).

Position 9–11 (9–11 (NWK)) interacts with substrate. Residue histidine 96 is the Electrophile of the active site. Residue glutamate 165 is the Proton acceptor of the active site. Residues glycine 171, serine 204, and 225–226 (GG) each bind substrate.

This sequence belongs to the triosephosphate isomerase family. Homodimer.

The protein localises to the cytoplasm. The enzyme catalyses D-glyceraldehyde 3-phosphate = dihydroxyacetone phosphate. The protein operates within carbohydrate biosynthesis; gluconeogenesis. It functions in the pathway carbohydrate degradation; glycolysis; D-glyceraldehyde 3-phosphate from glycerone phosphate: step 1/1. Its function is as follows. Involved in the gluconeogenesis. Catalyzes stereospecifically the conversion of dihydroxyacetone phosphate (DHAP) to D-glyceraldehyde-3-phosphate (G3P). This is Triosephosphate isomerase from Acaryochloris marina (strain MBIC 11017).